A 57-amino-acid polypeptide reads, in one-letter code: Granulin-1 (57 aa).

2 disulfide bridges follow: Cys4-Cys16 and Cys10-Cys26.

This sequence belongs to the granulin family. In terms of processing, granulins are disulfide bridged. Ubiquitous.

The protein localises to the secreted. Functionally, granulins have possible cytokine-like activity. They may play a role in inflammation, wound repair, and tissue remodeling. The polypeptide is Granulin-1 (Cyprinus carpio (Common carp)).